The primary structure comprises 526 residues: Lysine--tRNA ligase (526 aa).

The Mg(2+) site is built by E431 and E438.

Belongs to the class-II aminoacyl-tRNA synthetase family. Homodimer. Mg(2+) serves as cofactor.

It is found in the cytoplasm. It catalyses the reaction tRNA(Lys) + L-lysine + ATP = L-lysyl-tRNA(Lys) + AMP + diphosphate. This is Lysine--tRNA ligase (lysS) from Chlamydia trachomatis serovar D (strain ATCC VR-885 / DSM 19411 / UW-3/Cx).